A 424-amino-acid polypeptide reads, in one-letter code: DUF21 domain-containing protein At4g33700 (424 aa).

Residues 1–11 (MAVEYVCCSPN) lie on the Extracellular side of the membrane. The region spanning 8 to 191 (CSPNFFIHIA…GKGGELTHDE (184 aa)) is the CNNM transmembrane domain. A helical transmembrane segment spans residues 12–32 (FFIHIAVIVFLVLFAGLMSGL). Topologically, residues 33–70 (TLGLMSLSLVDLEVLAKSGTPEHRKYAAKILPVVKNQH) are cytoplasmic. A helical membrane pass occupies residues 71–91 (LLLVTLLICNAAAMETLPIFL). Residues 92 to 94 (DGL) are Extracellular-facing. A helical membrane pass occupies residues 95 to 115 (VTAWGAILISVTLILLFGEII). Residues 116-136 (PQSICSRYGLAIGATVAPFVR) lie on the Cytoplasmic side of the membrane. Residues 137–157 (VLVFICLPVAWPISKLLDFLL) form a helical membrane-spanning segment. The Extracellular segment spans residues 158–424 (GHRRAALFRR…DETDHHFEDS (267 aa)). Residues 210-271 (MTPISDIFVI…TINPDEEIPV (62 aa)) form the CBS 1 domain. N-linked (GlcNAc...) asparagine glycans are attached at residues N273 and N319. 2 CBS domains span residues 275-331 (TIRR…DVDS) and 355-416 (PNRA…IFDE). Disordered regions lie at residues 321–340 (SVKE…PQER) and 355–374 (PNRA…SKDN). S331 bears the Phosphoserine mark.

The protein localises to the membrane. In Arabidopsis thaliana (Mouse-ear cress), this protein is DUF21 domain-containing protein At4g33700 (CBSDUF6).